The primary structure comprises 396 residues: MSFDLRTRLDARRAAHLYRQRPLLQSPQGPQVIVDGQPLLAFCNNDYMGLANHPEVIAAWQAGAERWGVGGGASHLVIGHSAPHHELEEALAELTGRPRALLFSNGYMANLGAVTALVGQGDTVLEDRLNHASLLDAGLLSGARFSRYLHNDVSSLEARLEKSVGDTLVVTDGVFSMDGDIADLPALARSAKAKGAWLMVDDAHGFGPLGANGAGIVEHFGLSMDDVPVLVGTLGKSFGTSGAFVAGSEELIETLIQFARPYIYTTSQPPALACATLKSLQLLRTEHWRREHLTRLIQQFRRGAEQIGLQLMDSFTPIQPIMIGDAGRALHLSQLLRERGLLVTAIRPPTVPAGSARLRVTLSAAHSEADVQLLLNTLEQCYPLLDASHSSEPVHA.

Residue arginine 19 coordinates substrate. 106–107 (GY) is a binding site for pyridoxal 5'-phosphate. Histidine 131 is a substrate binding site. Pyridoxal 5'-phosphate-binding residues include serine 176, histidine 204, and threonine 233. Position 236 is an N6-(pyridoxal phosphate)lysine (lysine 236). Position 350 (threonine 350) interacts with substrate.

This sequence belongs to the class-II pyridoxal-phosphate-dependent aminotransferase family. BioF subfamily. Homodimer. Requires pyridoxal 5'-phosphate as cofactor.

The enzyme catalyses 6-carboxyhexanoyl-[ACP] + L-alanine + H(+) = (8S)-8-amino-7-oxononanoate + holo-[ACP] + CO2. It participates in cofactor biosynthesis; biotin biosynthesis. In terms of biological role, catalyzes the decarboxylative condensation of pimeloyl-[acyl-carrier protein] and L-alanine to produce 8-amino-7-oxononanoate (AON), [acyl-carrier protein], and carbon dioxide. The chain is 8-amino-7-oxononanoate synthase from Pseudomonas syringae pv. syringae (strain B728a).